A 309-amino-acid chain; its full sequence is Aspartate carbamoyltransferase catalytic subunit (309 aa).

Residues Arg-55 and Thr-56 each coordinate carbamoyl phosphate. Lys-85 is a binding site for L-aspartate. Carbamoyl phosphate contacts are provided by Arg-106, His-135, and Gln-138. Residues Arg-168 and Arg-230 each coordinate L-aspartate. The carbamoyl phosphate site is built by Leu-268 and Pro-269.

Belongs to the aspartate/ornithine carbamoyltransferase superfamily. ATCase family. As to quaternary structure, heterododecamer (2C3:3R2) of six catalytic PyrB chains organized as two trimers (C3), and six regulatory PyrI chains organized as three dimers (R2).

It carries out the reaction carbamoyl phosphate + L-aspartate = N-carbamoyl-L-aspartate + phosphate + H(+). It participates in pyrimidine metabolism; UMP biosynthesis via de novo pathway; (S)-dihydroorotate from bicarbonate: step 2/3. Catalyzes the condensation of carbamoyl phosphate and aspartate to form carbamoyl aspartate and inorganic phosphate, the committed step in the de novo pyrimidine nucleotide biosynthesis pathway. The protein is Aspartate carbamoyltransferase catalytic subunit of Vibrio cholerae serotype O1 (strain ATCC 39315 / El Tor Inaba N16961).